The following is a 64-amino-acid chain: DNA gyrase inhibitor YacG (64 aa).

Zn(2+)-binding residues include Cys9, Cys12, Cys28, and Cys32. The segment at 42 to 64 (DEENAIPGAPDMSDSDGWSEEQY) is disordered. Acidic residues predominate over residues 54-64 (SDSDGWSEEQY).

This sequence belongs to the DNA gyrase inhibitor YacG family. As to quaternary structure, interacts with GyrB. Zn(2+) is required as a cofactor.

Inhibits all the catalytic activities of DNA gyrase by preventing its interaction with DNA. Acts by binding directly to the C-terminal domain of GyrB, which probably disrupts DNA binding by the gyrase. The sequence is that of DNA gyrase inhibitor YacG from Vibrio vulnificus (strain CMCP6).